The following is a 22-amino-acid chain: 2.4 kDa venom peptide (22 aa).

Contains 2 disulfide bonds. In terms of tissue distribution, expressed by the venom gland.

The protein resides in the secreted. Not lethal to mice by intraperitoneal or intracerebroventricular injections in doses up to 150 micrograms. This Heterometrus spinifer (Asia giant forest scorpion) protein is 2.4 kDa venom peptide.